A 477-amino-acid polypeptide reads, in one-letter code: Bifunctional protein HldE (477 aa).

The segment at 1–318 (MKVTLPEFER…ENAVRGRADT (318 aa)) is ribokinase. 195–198 (NLSE) contributes to the ATP binding site. Asp-264 is an active-site residue. A cytidylyltransferase region spans residues 344–477 (MTNGVFDILH…IKKIQKDSDK (134 aa)).

This sequence in the N-terminal section; belongs to the carbohydrate kinase PfkB family. The protein in the C-terminal section; belongs to the cytidylyltransferase family. As to quaternary structure, homodimer.

It carries out the reaction D-glycero-beta-D-manno-heptose 7-phosphate + ATP = D-glycero-beta-D-manno-heptose 1,7-bisphosphate + ADP + H(+). The enzyme catalyses D-glycero-beta-D-manno-heptose 1-phosphate + ATP + H(+) = ADP-D-glycero-beta-D-manno-heptose + diphosphate. Its pathway is nucleotide-sugar biosynthesis; ADP-L-glycero-beta-D-manno-heptose biosynthesis; ADP-L-glycero-beta-D-manno-heptose from D-glycero-beta-D-manno-heptose 7-phosphate: step 1/4. The protein operates within nucleotide-sugar biosynthesis; ADP-L-glycero-beta-D-manno-heptose biosynthesis; ADP-L-glycero-beta-D-manno-heptose from D-glycero-beta-D-manno-heptose 7-phosphate: step 3/4. In terms of biological role, catalyzes the phosphorylation of D-glycero-D-manno-heptose 7-phosphate at the C-1 position to selectively form D-glycero-beta-D-manno-heptose-1,7-bisphosphate. Catalyzes the ADP transfer from ATP to D-glycero-beta-D-manno-heptose 1-phosphate, yielding ADP-D-glycero-beta-D-manno-heptose. The protein is Bifunctional protein HldE of Citrobacter koseri (strain ATCC BAA-895 / CDC 4225-83 / SGSC4696).